We begin with the raw amino-acid sequence, 193 residues long: Putative manganese efflux pump MntP (193 aa).

Transmembrane regions (helical) follow at residues 8-28, 37-57, 61-81, 109-129, 138-158, and 172-192; these read LLAI…GIIL, LVMA…GWMF, FSHL…AFLG, MAIA…LLGI, PILI…YFGI, and LWGG…HLFL.

This sequence belongs to the MntP (TC 9.B.29) family.

It is found in the cell inner membrane. Probably functions as a manganese efflux pump. The protein is Putative manganese efflux pump MntP of Bacteroides thetaiotaomicron (strain ATCC 29148 / DSM 2079 / JCM 5827 / CCUG 10774 / NCTC 10582 / VPI-5482 / E50).